The chain runs to 406 residues: L-carnitine CoA-transferase (406 aa).

CoA-binding residues include lysine 98 and arginine 105. The active-site Nucleophile is aspartate 170.

The protein belongs to the CoA-transferase III family. CaiB subfamily. As to quaternary structure, homodimer.

Its subcellular location is the cytoplasm. The enzyme catalyses crotonobetainyl-CoA + (R)-carnitine = crotonobetaine + (R)-carnitinyl-CoA. It catalyses the reaction 4-(trimethylamino)butanoyl-CoA + (R)-carnitine = (R)-carnitinyl-CoA + 4-(trimethylamino)butanoate. Its pathway is amine and polyamine metabolism; carnitine metabolism. Its function is as follows. Catalyzes the reversible transfer of the CoA moiety from gamma-butyrobetainyl-CoA to L-carnitine to generate L-carnitinyl-CoA and gamma-butyrobetaine. Is also able to catalyze the reversible transfer of the CoA moiety from gamma-butyrobetainyl-CoA or L-carnitinyl-CoA to crotonobetaine to generate crotonobetainyl-CoA. In Proteus mirabilis (strain HI4320), this protein is L-carnitine CoA-transferase.